The chain runs to 216 residues: 3-keto-L-gulonate-6-phosphate decarboxylase UlaD (216 aa).

A substrate-binding site is contributed by Asp11. Mg(2+)-binding residues include Glu33 and Asp62. Arg192 is a binding site for substrate.

This sequence belongs to the HPS/KGPDC family. KGPDC subfamily. In terms of assembly, homodimer. Mg(2+) is required as a cofactor.

It carries out the reaction 3-dehydro-L-gulonate 6-phosphate + H(+) = L-xylulose 5-phosphate + CO2. It participates in cofactor degradation; L-ascorbate degradation; D-xylulose 5-phosphate from L-ascorbate: step 2/4. Its function is as follows. Catalyzes the decarboxylation of 3-keto-L-gulonate-6-P into L-xylulose-5-P. Is involved in the anaerobic L-ascorbate utilization. This chain is 3-keto-L-gulonate-6-phosphate decarboxylase UlaD, found in Escherichia coli O127:H6 (strain E2348/69 / EPEC).